We begin with the raw amino-acid sequence, 78 residues long: Large ribosomal subunit protein bL28 (78 aa).

The protein belongs to the bacterial ribosomal protein bL28 family.

The polypeptide is Large ribosomal subunit protein bL28 (Thermosynechococcus vestitus (strain NIES-2133 / IAM M-273 / BP-1)).